A 297-amino-acid polypeptide reads, in one-letter code: Thoeris protein ThsA (297 aa).

2 helical membrane passes run 32-52 (ALSI…FLDL) and 57-77 (RLII…VQFI).

The protein localises to the cell membrane. Activated by a signal molecule generated by ThsB. Probable membrane protein component of the Thoeris antiviral defense system, composed of ThsA and ThsB. Expression of ThsA and ThsB in B.subtilis (strain BEST7003) confers resistance to phages SBSphiC, SBSphiJ and SPO1. Activation by a signal generated by ThsB leads to phage resistance. In Bacillus amyloliquefaciens (strain Y2) (Bacillus amyloliquefaciens subsp. plantarum (strain B9601-Y2)), this protein is Thoeris protein ThsA.